A 321-amino-acid chain; its full sequence is Probable arabinan endo-1,5-alpha-L-arabinosidase A (321 aa).

The N-terminal stretch at 1–19 is a signal peptide; the sequence is MYRLLSVASVPLLASLVHG. Residue Asp34 is the Proton acceptor of the active site. Glu200 acts as the Proton donor in catalysis. The N-linked (GlcNAc...) asparagine glycan is linked to Asn295.

The protein belongs to the glycosyl hydrolase 43 family.

It localises to the secreted. The catalysed reaction is Endohydrolysis of (1-&gt;5)-alpha-arabinofuranosidic linkages in (1-&gt;5)-arabinans.. Its pathway is glycan metabolism; L-arabinan degradation. Endo-1,5-alpha-L-arabinanase involved in degradation of pectin. Its preferred substrate is linear 1,5-alpha-L-arabinan. The sequence is that of Probable arabinan endo-1,5-alpha-L-arabinosidase A (abnA) from Aspergillus niger (strain ATCC MYA-4892 / CBS 513.88 / FGSC A1513).